A 337-amino-acid chain; its full sequence is HTH-type transcriptional regulator DegA (337 aa).

The HTH lacI-type domain maps to 1 to 57; the sequence is MKTTIYDVAKAAGVSITTVSRVINNTGRISDKTRQKVMNVMNEMAYTPNVHAAALTG. Positions 5–24 form a DNA-binding region, H-T-H motif; it reads IYDVAKAAGVSITTVSRVIN. Positions 300 to 319 are disordered; the sequence is AERHRTAGRSNRGKRKAKQK.

Its function is as follows. Involved in the control of degradation of B.subtilis amidophosphoribosyltransferase (purF). Probably activates the gene for a degradative protease. The chain is HTH-type transcriptional regulator DegA (degA) from Bacillus subtilis (strain 168).